A 99-amino-acid chain; its full sequence is Small ribosomal subunit protein uS19 (99 aa).

The protein belongs to the universal ribosomal protein uS19 family.

Functionally, protein S19 forms a complex with S13 that binds strongly to the 16S ribosomal RNA. The chain is Small ribosomal subunit protein uS19 from Sulfurihydrogenibium sp. (strain YO3AOP1).